Reading from the N-terminus, the 434-residue chain is Transcriptional enhancer factor TEF-3 (434 aa).

The segment covering 1 to 28 has biased composition (polar residues); sequence MEGTAGTITSNEWSSPTSPEGSTASGGS. Disordered regions lie at residues 1–42 and 188–215; these read MEGT…AEGV and QPPLPLPGFESPAGPAPSPSAPPAPPWQ. The TEA DNA-binding region spans 36 to 112; sequence DNDAEGVWSP…QVLARRKARE (77 aa). Residues 201–213 show a composition bias toward pro residues; the sequence is GPAPSPSAPPAPP.

As to quaternary structure, interacts with YAP1 and WWTR1/TAZ. In terms of tissue distribution, preferentially expressed in skeletal muscle. Lower levels in pancreas, placenta, and heart.

The protein resides in the nucleus. Its function is as follows. Transcription factor which plays a key role in the Hippo signaling pathway, a pathway involved in organ size control and tumor suppression by restricting proliferation and promoting apoptosis. The core of this pathway is composed of a kinase cascade wherein MST1/MST2, in complex with its regulatory protein SAV1, phosphorylates and activates LATS1/2 in complex with its regulatory protein MOB1, which in turn phosphorylates and inactivates YAP1 oncoprotein and WWTR1/TAZ. Acts by mediating gene expression of YAP1 and WWTR1/TAZ, thereby regulating cell proliferation, migration and epithelial mesenchymal transition (EMT) induction. Binds specifically and non-cooperatively to the Sph and GT-IIC 'enhansons' (5'-GTGGAATGT-3') and activates transcription. Binds to the M-CAT motif. The chain is Transcriptional enhancer factor TEF-3 (TEAD4) from Homo sapiens (Human).